A 29-amino-acid polypeptide reads, in one-letter code: MDLITITWASVMVAFTFSLSLVVWGRSGL.

The chain crosses the membrane as a helical span at residues 3–23; that stretch reads LITITWASVMVAFTFSLSLVV.

The protein belongs to the PetN family. The 4 large subunits of the cytochrome b6-f complex are cytochrome b6, subunit IV (17 kDa polypeptide, PetD), cytochrome f and the Rieske protein, while the 4 small subunits are PetG, PetL, PetM and PetN. The complex functions as a dimer.

The protein localises to the plastid. Its subcellular location is the chloroplast thylakoid membrane. Component of the cytochrome b6-f complex, which mediates electron transfer between photosystem II (PSII) and photosystem I (PSI), cyclic electron flow around PSI, and state transitions. This chain is Cytochrome b6-f complex subunit 8, found in Chaetosphaeridium globosum (Charophycean green alga).